Reading from the N-terminus, the 309-residue chain is Aromatic prenyltransferase (309 aa).

It belongs to the aromatic prenyltransferase family.

Prenyltransferase that attaches isoprenoid moieties to carbon atoms of aromatic substrates in an enzyme-catalyzed Friedel-Crafts reaction. Shows specificity for dimethylallyl diphosphate (DMAPP) and does not accept geranyl diphosphate (GPP) or isopentenyl diphosphate (IPP). Prenylates the artificial substrate 2,7-dihydroxynaphthalene (2,7-DHN), as well as dihydrophenazine-1-carboxylic acid and 4-hydroxybenzoic acid at lower levels. Only traces of products are detected with aspulvinone E or flaviolin as substrates; and no product is formed with L-tryptophan, L-tyrosine, or 4-hydroxyphenylpyruvate. Ptf seems no to be involved in the prenylation reaction in the biosynthesis of aspulvinone H and J and the physiological function of ptf remains unknown. This Sclerotinia sclerotiorum (strain ATCC 18683 / 1980 / Ss-1) (White mold) protein is Aromatic prenyltransferase.